A 222-amino-acid polypeptide reads, in one-letter code: Putative thymidylate synthase (222 aa).

Residue Cys-139 is part of the active site.

This sequence belongs to the thymidylate synthase family. Archaeal-type ThyA subfamily. As to quaternary structure, monomer.

It is found in the cytoplasm. It functions in the pathway pyrimidine metabolism; dTTP biosynthesis. Functionally, may catalyze the biosynthesis of dTMP using an unknown cosubstrate. This is Putative thymidylate synthase from Methanocaldococcus jannaschii (strain ATCC 43067 / DSM 2661 / JAL-1 / JCM 10045 / NBRC 100440) (Methanococcus jannaschii).